The chain runs to 185 residues: NEDD8-conjugating enzyme UBE2F (185 aa).

Residue methionine 1 is modified to N-acetylmethionine. Positions 1-29 (MLTLASKLKRDDGLKGSRASATASDSTRR) are interaction with UBA3. Positions 32–185 (VRDRLLVKEV…VEDYIKRYAR (154 aa)) constitute a UBC core domain. The active-site Glycyl thioester intermediate is cysteine 116.

Belongs to the ubiquitin-conjugating enzyme family. UBE2F subfamily. In terms of assembly, interacts with UBA3 and RBX2. Interacts (N-terminally acetylated form) with (via DCUN1 domain) DCUN1D1, DCUN1D2, DCUN1D3, DCUN1D4 and DCUN1D5. Post-translationally, the acetylation of Met-1 increases affinity for DCUN1D3 by about 2 orders of magnitude and is crucial for NEDD8 transfer to cullins.

The catalysed reaction is [E1 NEDD8-activating enzyme]-S-[NEDD8 protein]-yl-L-cysteine + [E2 NEDD8-conjugating enzyme]-L-cysteine = [E1 NEDD8-activating enzyme]-L-cysteine + [E2 NEDD8-conjugating enzyme]-S-[NEDD8-protein]-yl-L-cysteine.. It functions in the pathway protein modification; protein neddylation. In terms of biological role, accepts the ubiquitin-like protein NEDD8 from the UBA3-NAE1 E1 complex and catalyzes its covalent attachment to other proteins. Together with the E3 ubiquitin ligase RNF7/RBX2, specifically neddylates cullin-5 (CUL5). Does not neddylate CUL1, CUL2, CUL3, CUL4A or CUL4B. Mediates neddylation of the CUL9-RBX1 complex. The chain is NEDD8-conjugating enzyme UBE2F (UBE2F) from Bos taurus (Bovine).